The primary structure comprises 354 residues: Methylthioribose-1-phosphate isomerase (354 aa).

Residues 58–60 (RGA), Arg101, and Gln204 each bind substrate. Catalysis depends on Asp245, which acts as the Proton donor. Position 255 to 256 (255 to 256 (NK)) interacts with substrate.

It belongs to the eIF-2B alpha/beta/delta subunits family. MtnA subfamily.

The catalysed reaction is 5-(methylsulfanyl)-alpha-D-ribose 1-phosphate = 5-(methylsulfanyl)-D-ribulose 1-phosphate. It participates in amino-acid biosynthesis; L-methionine biosynthesis via salvage pathway; L-methionine from S-methyl-5-thio-alpha-D-ribose 1-phosphate: step 1/6. Functionally, catalyzes the interconversion of methylthioribose-1-phosphate (MTR-1-P) into methylthioribulose-1-phosphate (MTRu-1-P). The polypeptide is Methylthioribose-1-phosphate isomerase (Xanthomonas oryzae pv. oryzae (strain MAFF 311018)).